An 829-amino-acid polypeptide reads, in one-letter code: UBA domain-containing protein 8 (829 aa).

In terms of domain architecture, EH 1 spans 10-109 (EQQEFDRLLE…KQAKDDHHIK (100 aa)). An EF-hand 1 domain is found at 43–78 (LPQKILAKIWDYCDQEDKGSLDRNQVYACFRLISQA). A disordered region spans residues 93–121 (GDPPILPKQAKDDHHIKRSSSETADFTPF). Phosphoserine occurs at positions 112 and 113. 2 consecutive EH domains span residues 129–225 (ERSE…AKSE) and 300–398 (DRSN…SDDT). The EF-hand 2 domain maps to 333-368 (LDSEELARIWDTVDTQDRGYIDKDEFAVAMEIIKLR). 2 stretches are compositionally biased toward polar residues: residues 466 to 506 (SFQD…TQSI) and 574 to 590 (TIPG…QTTE). Disordered regions lie at residues 466 to 520 (SFQD…VNSS), 574 to 614 (TIPG…MRKL), and 724 to 785 (KPQV…QSYE). Positions 602–709 (EPTEEEQEEM…AKIDSIIADS (108 aa)) form a coiled coil. Residues 728–737 (TPAPPTPAPT) are compositionally biased toward pro residues. The segment covering 764-774 (HANSSTPMNYV) has biased composition (polar residues). Residues 775–785 (SQPESPPQSYE) are compositionally biased toward low complexity. Residues 788-828 (QNDNELLQELLSMGFPREKAVIALEATNYDVNEAANILLSS) enclose the UBA domain.

The chain is UBA domain-containing protein 8 (ucp8) from Schizosaccharomyces pombe (strain 972 / ATCC 24843) (Fission yeast).